Here is an 86-residue protein sequence, read N- to C-terminus: Superoxide dismutase [Cu-Zn] (86 aa).

A disordered region spans residues 1 to 26 (AKEKGGKLTAGLAAGGHWNPNKAPHH). A compositionally biased stretch (low complexity) spans 7–16 (KLTAGLAAGG). H17 provides a ligand contact to Cu cation. H17, H26, H35, and D38 together coordinate Zn(2+). Position 73 (H73) interacts with Cu cation.

Belongs to the Cu-Zn superoxide dismutase family. In terms of assembly, homodimer. Cu cation is required as a cofactor. It depends on Zn(2+) as a cofactor.

It is found in the periplasm. It carries out the reaction 2 superoxide + 2 H(+) = H2O2 + O2. Its function is as follows. Destroys radicals which are normally produced within the cells and which are toxic to biological systems. The sequence is that of Superoxide dismutase [Cu-Zn] (sodC) from Mannheimia haemolytica (Pasteurella haemolytica).